The sequence spans 156 residues: Ribosomal RNA large subunit methyltransferase H (156 aa).

S-adenosyl-L-methionine contacts are provided by residues L73, G104, and 123-128 (LSSLTL).

It belongs to the RNA methyltransferase RlmH family. In terms of assembly, homodimer.

The protein localises to the cytoplasm. It catalyses the reaction pseudouridine(1915) in 23S rRNA + S-adenosyl-L-methionine = N(3)-methylpseudouridine(1915) in 23S rRNA + S-adenosyl-L-homocysteine + H(+). Functionally, specifically methylates the pseudouridine at position 1915 (m3Psi1915) in 23S rRNA. In Neisseria meningitidis serogroup C / serotype 2a (strain ATCC 700532 / DSM 15464 / FAM18), this protein is Ribosomal RNA large subunit methyltransferase H.